The following is a 589-amino-acid chain: Aspartate--tRNA ligase (589 aa).

E175 lines the L-aspartate pocket. The interval 199 to 202 (QLFK) is aspartate. L-aspartate is bound at residue R221. ATP-binding positions include 221 to 223 (RDE) and Q230. H449 is a binding site for L-aspartate. Residue E483 participates in ATP binding. R490 provides a ligand contact to L-aspartate. 535–538 (GLDR) contributes to the ATP binding site.

This sequence belongs to the class-II aminoacyl-tRNA synthetase family. Type 1 subfamily. As to quaternary structure, homodimer.

It is found in the cytoplasm. The enzyme catalyses tRNA(Asp) + L-aspartate + ATP = L-aspartyl-tRNA(Asp) + AMP + diphosphate. Its function is as follows. Catalyzes the attachment of L-aspartate to tRNA(Asp) in a two-step reaction: L-aspartate is first activated by ATP to form Asp-AMP and then transferred to the acceptor end of tRNA(Asp). The protein is Aspartate--tRNA ligase of Lysinibacillus sphaericus (strain C3-41).